We begin with the raw amino-acid sequence, 46 residues long: Protein PsbN (46 aa).

A helical membrane pass occupies residues 7-27 (ALSVALGVMAVVLGLTGFGVY).

The protein belongs to the PsbN family.

It is found in the cellular thylakoid membrane. Its function is as follows. May play a role in photosystem I and II biogenesis. The protein is Protein PsbN of Synechococcus sp. (strain CC9902).